The sequence spans 301 residues: Sulfate adenylyltransferase subunit 2 (301 aa).

It belongs to the PAPS reductase family. CysD subfamily. Heterodimer composed of CysD, the smaller subunit, and CysN.

The enzyme catalyses sulfate + ATP + H(+) = adenosine 5'-phosphosulfate + diphosphate. It participates in sulfur metabolism; hydrogen sulfide biosynthesis; sulfite from sulfate: step 1/3. Functionally, with CysN forms the ATP sulfurylase (ATPS) that catalyzes the adenylation of sulfate producing adenosine 5'-phosphosulfate (APS) and diphosphate, the first enzymatic step in sulfur assimilation pathway. APS synthesis involves the formation of a high-energy phosphoric-sulfuric acid anhydride bond driven by GTP hydrolysis by CysN coupled to ATP hydrolysis by CysD. The sequence is that of Sulfate adenylyltransferase subunit 2 from Citrifermentans bemidjiense (strain ATCC BAA-1014 / DSM 16622 / JCM 12645 / Bem) (Geobacter bemidjiensis).